Here is a 112-residue protein sequence, read N- to C-terminus: Small ribosomal subunit protein bS6 (112 aa).

Belongs to the bacterial ribosomal protein bS6 family.

Functionally, binds together with bS18 to 16S ribosomal RNA. The chain is Small ribosomal subunit protein bS6 from Azobacteroides pseudotrichonymphae genomovar. CFP2.